We begin with the raw amino-acid sequence, 713 residues long: Cadherin-13 (713 aa).

The signal sequence occupies residues 1-22 (MQPATPLVLCVLLSQVLLLTSA). Positions 23 to 138 (EDLDCTPGFQ…RTSPVPRQKR (116 aa)) are excised as a propeptide. Asn52 and Asn86 each carry an N-linked (GlcNAc...) asparagine glycan. Cadherin domains lie at 139–245 (SIVV…RPIF), 246–363 (REGP…SPKF), 364–477 (TKKE…SPVF), 478–585 (YPDP…APFI), and 584–694 (FIYP…AAGA). The tract at residues 156–178 (PRDVGKVVDSDRPEGSKFRLTGK) is disordered. Basic and acidic residues predominate over residues 158–172 (DVGKVVDSDRPEGSK). 7 N-linked (GlcNAc...) asparagine glycosylation sites follow: Asn382, Asn489, Asn500, Asn530, Asn598, Asn638, and Asn671. Gly693 carries GPI-anchor amidated glycine lipidation. A propeptide spans 694–713 (APHFSAATALLLSLFSLARL) (removed in mature form).

As to quaternary structure, by contrast to classical cadherins, homodimerization in trans is not mediated by cadherin EC1 domain strand-swapping, but instead through a homophilic adhesive interface which joins two elongated EC1-EC2 domains through a region near their Ca2+-binding sites to form a tetrahedral, X-like shape.

It is found in the cell membrane. The protein localises to the cytoplasm. Cadherins are calcium-dependent cell adhesion proteins. They preferentially interact with themselves in a homophilic manner in connecting cells; cadherins may thus contribute to the sorting of heterogeneous cell types. May act as a negative regulator of neural cell growth. This chain is Cadherin-13 (CDH13), found in Bos taurus (Bovine).